We begin with the raw amino-acid sequence, 307 residues long: Porphobilinogen deaminase (307 aa).

The residue at position 241 (Cys241) is an S-(dipyrrolylmethanemethyl)cysteine.

The protein belongs to the HMBS family. As to quaternary structure, monomer. Dipyrromethane serves as cofactor.

The catalysed reaction is 4 porphobilinogen + H2O = hydroxymethylbilane + 4 NH4(+). It participates in porphyrin-containing compound metabolism; protoporphyrin-IX biosynthesis; coproporphyrinogen-III from 5-aminolevulinate: step 2/4. Functionally, tetrapolymerization of the monopyrrole PBG into the hydroxymethylbilane pre-uroporphyrinogen in several discrete steps. This Coxiella burnetii (strain CbuK_Q154) (Coxiella burnetii (strain Q154)) protein is Porphobilinogen deaminase.